We begin with the raw amino-acid sequence, 675 residues long: UvrABC system protein B (675 aa).

In terms of domain architecture, Helicase ATP-binding spans 32–417 (EGLSDGLAYQ…EHAGQVVEQV (386 aa)). ATP is bound at residue 45-52 (GVTGSGKT). Positions 98–121 (YYDYYQPEAYVPSRDLFIEKDSAI) match the Beta-hairpin motif. Residues 436–602 (QVDDLMSEIN…QIKKQVKDII (167 aa)) enclose the Helicase C-terminal domain. In terms of domain architecture, UVR spans 634–669 (IKEIAKLEKAMQQAARDLQFEEAAVLRDRIRNIKEN).

It belongs to the UvrB family. In terms of assembly, forms a heterotetramer with UvrA during the search for lesions. Interacts with UvrC in an incision complex.

It is found in the cytoplasm. In terms of biological role, the UvrABC repair system catalyzes the recognition and processing of DNA lesions. A damage recognition complex composed of 2 UvrA and 2 UvrB subunits scans DNA for abnormalities. Upon binding of the UvrA(2)B(2) complex to a putative damaged site, the DNA wraps around one UvrB monomer. DNA wrap is dependent on ATP binding by UvrB and probably causes local melting of the DNA helix, facilitating insertion of UvrB beta-hairpin between the DNA strands. Then UvrB probes one DNA strand for the presence of a lesion. If a lesion is found the UvrA subunits dissociate and the UvrB-DNA preincision complex is formed. This complex is subsequently bound by UvrC and the second UvrB is released. If no lesion is found, the DNA wraps around the other UvrB subunit that will check the other stand for damage. The sequence is that of UvrABC system protein B from Neisseria meningitidis serogroup A / serotype 4A (strain DSM 15465 / Z2491).